The chain runs to 204 residues: Small ribosomal subunit protein uS7 (204 aa).

The residue at position 1 (M1) is an N-acetylmethionine. An N-acetylthreonine; in 40S ribosomal protein S5, N-terminally processed modification is found at T2. Position 14 is a phosphothreonine (T14). Position 47 is an N6-acetyllysine; alternate (K47). K47 is covalently cross-linked (Glycyl lysine isopeptide (Lys-Gly) (interchain with G-Cter in SUMO2); alternate). S142 carries the post-translational modification Phosphoserine.

This sequence belongs to the universal ribosomal protein uS7 family. Component of the small ribosomal subunit. Part of the small subunit (SSU) processome, composed of more than 70 proteins and the RNA chaperone small nucleolar RNA (snoRNA) U3.

The protein resides in the cytoplasm. The protein localises to the nucleus. It is found in the nucleolus. Component of the small ribosomal subunit. The ribosome is a large ribonucleoprotein complex responsible for the synthesis of proteins in the cell. Part of the small subunit (SSU) processome, first precursor of the small eukaryotic ribosomal subunit. During the assembly of the SSU processome in the nucleolus, many ribosome biogenesis factors, an RNA chaperone and ribosomal proteins associate with the nascent pre-rRNA and work in concert to generate RNA folding, modifications, rearrangements and cleavage as well as targeted degradation of pre-ribosomal RNA by the RNA exosome. This is Small ribosomal subunit protein uS7 (Rps5) from Rattus norvegicus (Rat).